The chain runs to 386 residues: Tetratricopeptide repeat protein 4 (386 aa).

An N-acetylmethionine modification is found at M1. S51 carries the post-translational modification Phosphoserine. TPR repeat units lie at residues 79–112 (AKTY…KCAD), 117–150 (AVLY…KPGH), and 151–184 (LKAI…DAKE). S244 bears the Phosphoserine mark.

The protein belongs to the TTC4 family. As to quaternary structure, interacts (via TPR repeats) with HSP90AB1. Interacts with HSPA8, CDC6 and TBK1. Interacts with isoform 1 and isoform 3 of MSL1. In terms of tissue distribution, expressed at high levels in the heart, testis, kidney, brain and tongue. Expressed at low levels in the stomach, lung and liver.

It localises to the nucleus. The protein localises to the nucleoplasm. Its subcellular location is the cytoplasm. Functionally, may act as a co-chaperone for HSP90AB1. The protein is Tetratricopeptide repeat protein 4 (Ttc4) of Mus musculus (Mouse).